The chain runs to 264 residues: MKKLKLHGFNNLTKSLSFCIYDICYAKTAEERDGYIAYIDELYNANRLTEILSETCSIIGANILNIARQDYEPQGASVTILVSEEPVDPKLIDQTEHPGPLPETVVAHLDKSHICVHTYPESHPEGGLCTFRADIEVSTCGVISPLKALNYLIHQLESDIVTIDYRVRGFTRDVNGMKHFIDHEINSIQNFMSEDMKSLYDMVDVNVYQENIFHTKMLLKEFDLKHYMFHTKPEDLTETERQQITAALWKEMREIYYGRNISAV.

Residue S112 is the Schiff-base intermediate with substrate; via pyruvic acid of the active site. The residue at position 112 (S112) is a Pyruvic acid (Ser); by autocatalysis. The active-site Proton acceptor; for processing activity is the H117. The Proton donor; for catalytic activity role is filled by C140.

It belongs to the prokaryotic AdoMetDC family. Type 2 subfamily. Heterooctamer of four alpha and four beta chains arranged as a tetramer of alpha/beta heterodimers. The cofactor is pyruvate. Post-translationally, is synthesized initially as an inactive proenzyme. Formation of the active enzyme involves a self-maturation process in which the active site pyruvoyl group is generated from an internal serine residue via an autocatalytic post-translational modification. Two non-identical subunits are generated from the proenzyme in this reaction, and the pyruvate is formed at the N-terminus of the alpha chain, which is derived from the carboxyl end of the proenzyme. The post-translation cleavage follows an unusual pathway, termed non-hydrolytic serinolysis, in which the side chain hydroxyl group of the serine supplies its oxygen atom to form the C-terminus of the beta chain, while the remainder of the serine residue undergoes an oxidative deamination to produce ammonia and the pyruvoyl group blocking the N-terminus of the alpha chain.

The catalysed reaction is S-adenosyl-L-methionine + H(+) = S-adenosyl 3-(methylsulfanyl)propylamine + CO2. The protein operates within amine and polyamine biosynthesis; S-adenosylmethioninamine biosynthesis; S-adenosylmethioninamine from S-adenosyl-L-methionine: step 1/1. Its function is as follows. Catalyzes the decarboxylation of S-adenosylmethionine to S-adenosylmethioninamine (dcAdoMet), the propylamine donor required for the synthesis of the polyamines spermine and spermidine from the diamine putrescine. This chain is S-adenosylmethionine decarboxylase proenzyme, found in Salmonella dublin (strain CT_02021853).